Consider the following 142-residue polypeptide: Large ribosomal subunit protein uL13 (142 aa).

It belongs to the universal ribosomal protein uL13 family. Part of the 50S ribosomal subunit.

This protein is one of the early assembly proteins of the 50S ribosomal subunit, although it is not seen to bind rRNA by itself. It is important during the early stages of 50S assembly. This is Large ribosomal subunit protein uL13 from Buchnera aphidicola subsp. Cinara cedri (strain Cc).